The following is a 483-amino-acid chain: Isocitrate dehydrogenase [NADP] (483 aa).

Residue T74 participates in NADP(+) binding. D-threo-isocitrate contacts are provided by S83, N85, R89, R99, and R121. Position 232 (D232) interacts with Mg(2+). NADP(+) contacts are provided by residues 264–270 (HGSAPDI) and N277.

This sequence belongs to the isocitrate and isopropylmalate dehydrogenases family. In terms of assembly, homodimer. Requires Mg(2+) as cofactor. The cofactor is Mn(2+).

The catalysed reaction is D-threo-isocitrate + NADP(+) = 2-oxoglutarate + CO2 + NADPH. Its function is as follows. Catalyzes the oxidative decarboxylation of isocitrate to 2-oxoglutarate and carbon dioxide with the concomitant reduction of NADP(+). This is Isocitrate dehydrogenase [NADP] (icd) from Rickettsia bellii (strain RML369-C).